We begin with the raw amino-acid sequence, 1101 residues long: Zinc finger SWIM domain-containing protein 4 (1101 aa).

Residues 1-29 (MEPPAAKRSRGCPAGDEPGTGARRSRPEP) are disordered. The SWIM-type zinc finger occupies 134–171 (YHVSISFDRCKITSVSCGCDNRDLFYCAHVVALSLYRI).

In Mus musculus (Mouse), this protein is Zinc finger SWIM domain-containing protein 4 (Zswim4).